We begin with the raw amino-acid sequence, 126 residues long: Large ribosomal subunit protein eL28 (126 aa).

S2 is subject to N-acetylserine.

This sequence belongs to the eukaryotic ribosomal protein eL28 family.

The chain is Large ribosomal subunit protein eL28 (rpl-28) from Caenorhabditis elegans.